A 1085-amino-acid polypeptide reads, in one-letter code: Extracellular calcium-sensing receptor (1085 aa).

The N-terminal stretch at 1 to 19 (MALYSCCWILLAFSTWCTS) is a signal peptide. Over 20 to 611 (AYGPDQRAQK…KEIEFLSWTE (592 aa)) the chain is Extracellular. The segment at 23-189 (PDQRAQKKGD…QFKSFLRTIP (167 aa)) is ligand-binding 1 (LB1). Cysteine 61 and cysteine 102 form a disulfide bridge. 67-71 (RGFRW) is a binding site for phosphate. The Ca(2+) site is built by isoleucine 82, serine 85, leucine 88, and leucine 89. Asparagine 91 carries N-linked (GlcNAc...) asparagine glycosylation. A Ca(2+)-binding site is contributed by threonine 101. The N-linked (GlcNAc...) asparagine glycan is linked to asparagine 131. Residue threonine 146 coordinates Ca(2+). L-tryptophan contacts are provided by serine 148, alanine 169, and serine 171. Ca(2+) contacts are provided by serine 171, proline 189, aspartate 191, glutamate 232, and aspartate 235. The interval 190–325 (NDEHQATAMA…GGTIGFGLKA (136 aa)) is ligand-binding 2 (LB2). Intrachain disulfides connect cysteine 237–cysteine 562, cysteine 359–cysteine 396, cysteine 438–cysteine 450, cysteine 543–cysteine 563, cysteine 547–cysteine 566, cysteine 569–cysteine 583, and cysteine 586–cysteine 599. Residues aspartate 239 and serine 241 each contribute to the spermine site. Residues asparagine 262 and asparagine 288 are each glycosylated (N-linked (GlcNAc...) asparagine). Glutamate 298 lines the Ca(2+) pocket. Glutamate 298 contacts L-tryptophan. Residue asparagine 401 is glycosylated (N-linked (GlcNAc...) asparagine). 416–418 (RIS) is a binding site for phosphate. N-linked (GlcNAc...) asparagine glycosylation is found at asparagine 447, asparagine 469, and asparagine 489. Residue tyrosine 490 participates in Ca(2+) binding. An N-linked (GlcNAc...) asparagine glycan is attached at asparagine 542. A cysteine-rich (CR) region spans residues 543-613 (CSRDCLAGTR…IEFLSWTEPF (71 aa)). Glycine 558 contacts Ca(2+). N-linked (GlcNAc...) asparagine glycosylation is present at asparagine 595. The helical transmembrane segment at 612 to 637 (PFGIALTLFAVLGIFLTAFVLGVFIK) threads the bilayer. At 638–649 (FRNTPIVKATNR) the chain is on the cytoplasmic side. The tract at residues 638–649 (FRNTPIVKATNR) is intracellular loop 1 (ICL1). The helical transmembrane segment at 650–669 (ELSYLLLFSLLCCFSSSLFF) threads the bilayer. Topologically, residues 670 to 675 (IGEPQD) are extracellular. Residues 676-699 (WTCRLRQPAFGISFVLCISCILVK) form a helical membrane-spanning segment. Topologically, residues 700-723 (TNRVLLVFEAKIPTSFHRKWWGLN) are cytoplasmic. The tract at residues 700 to 723 (TNRVLLVFEAKIPTSFHRKWWGLN) is intracellular loop 2 (ICL2). Residues 724–746 (LQFLLVFLCTFMQIVICAIWLNT) traverse the membrane as a helical segment. Topologically, residues 747-770 (APPSSYRNHELEDEIIFITCHEGS) are extracellular. A helical transmembrane segment spans residues 771-790 (LMALGFLIGYTCLLAAICFF). The Cytoplasmic portion of the chain corresponds to 791–806 (FAFKSRKLPENFNEAK). An intracellular loop 3 (ICL3) region spans residues 791–806 (FAFKSRKLPENFNEAK). A helical membrane pass occupies residues 807–829 (FITFSMLIFFIVWISFIPAYAST). Topologically, residues 830–833 (YGKF) are extracellular. A helical transmembrane segment spans residues 834 to 855 (VSAVEVIAILAASFGLLACIFF). Topologically, residues 856–1085 (NKVYIILFKP…STVTENMLRS (230 aa)) are cytoplasmic. Residues 856–1085 (NKVYIILFKP…STVTENMLRS (230 aa)) form a C-terminus region. Residues 881-901 (AFKVAARATLRRSNVSRQRSS) form an interaction with RNF19A region. At threonine 889 the chain carries Phosphothreonine. Residues 891–899 (RRSNVSRQR) are arginine-rich retention motif. Serine 893, serine 900, and serine 921 each carry phosphoserine. The span at 893 to 938 (SNVSRQRSSSLGGSTGSTPSSSISSKSNSEDPFPQQQPKRQKQPQP) shows a compositional bias: low complexity. Disordered regions lie at residues 893–969 (SNVS…PPRC) and 1034–1058 (SQETGLQGPVGEDHQLEMEDPEEMS). The segment covering 950–960 (QPRPPSTPQPQ) has biased composition (pro residues). Residue serine 1068 is modified to Phosphoserine.

The protein belongs to the G-protein coupled receptor 3 family. As to quaternary structure, homodimer; disulfide-linked. Interacts with VCP. Interacts with ARRB1. Phosphorylation at Thr-889 by PKC impairs coupling with G(q)/G(11) G-proteins, while it does not affect G(i)/G(o)-coupling. Phosphorylation at Ser-893 by PKC and Ser-900 by PKA promote plasma membrane localization. In terms of processing, ubiquitinated by RNF19A; which induces proteasomal degradation.

The protein localises to the cell membrane. In resting state, adopts an open conformation, anion-binding promoting the inactive configuration. Upon aromatic amino acid-binding, the groove in the extracellular venus flytrap module is closed, thereby inducing the formation of a novel homodimer interface between subunits. Calcium ions stabilize the active state by enhancing homodimer interactions between membrane-proximal domains to fully activate the receptor. Upon activation, the homodimer adopts an asymmetric configuration of the 7-transmembrane region that primes one protomer for G-protein coupling. G-protein binding expands the transmembrane dimer interface; the restriction imposed by the receptor dimer, in combination with intracellular loop 2 (ICL2), enables G-protein activation by facilitating conformational transition of G-protein alpha. Coupling to different classes of G-proteins results in distinct CASR-G-protein interfaces. In terms of biological role, G-protein-coupled receptor that senses changes in the extracellular concentration of calcium ions and plays a key role in maintaining calcium homeostasis. Senses fluctuations in the circulating calcium concentration: activated by elevated circulating calcium, leading to decreased parathyroid hormone (PTH) secretion in parathyroid glands. In kidneys, acts as a key regulator of renal tubular calcium resorption. Ligand binding causes a conformation change that triggers signaling via guanine nucleotide-binding proteins (G-proteins) and modulates the activity of downstream effectors. CASR is coupled with different G(q)/G(11), G(i)/G(o)- or G(s)-classes of G-proteins depending on the context. In the parathyroid and kidney, CASR signals through G(q)/G(11) and G(i)/G(o) G-proteins: G(q)/G(11) coupling activates phospholipase C-beta, releasing diacylglycerol (DAG) and inositol 1,4,5-trisphosphate (IP3) second messengers, while G(i)/G(o) coupling mediates inhibition of adenylate cyclase activity. The G-protein-coupled receptor activity is activated by a co-agonist mechanism: aromatic amino acids, such as Trp or Phe, act concertedly with divalent cations, such as calcium or magnesium, to achieve full receptor activation. Acts as an activator of the NLRP3 inflammasome via G(i)/G(o)-mediated signaling: down-regulation of cyclic AMP (cAMP) relieving NLRP3 inhibition by cAMP. Acts as a regulator of proton-sensing receptor GPR68 in a seesaw manner: CASR-mediated signaling inhibits GPR68 signaling in response to extracellular calcium, while GPR68 inhibits CASR in presence of extracellular protons. In Bos taurus (Bovine), this protein is Extracellular calcium-sensing receptor (CASR).